The primary structure comprises 215 residues: Adenylate kinase (215 aa).

10-15 (GAGKGT) is a binding site for ATP. The interval 30 to 59 (STGDILRANVREGTELGLAAKAYMDKGELV) is NMP. AMP-binding positions include Thr31, Arg36, 57–59 (ELV), 85–88 (GYPR), and Gln92. The segment at 126–162 (GRLMCKCGASYHIISNPPKKDNVCDICGGEVFQRADD) is LID. Position 127 (Arg127) interacts with ATP. Zn(2+)-binding residues include Cys130 and Cys132. An ATP-binding site is contributed by 135-136 (SY). Residues Cys149 and Cys152 each coordinate Zn(2+). AMP is bound by residues Arg159 and Arg170. Residue Lys198 coordinates ATP.

It belongs to the adenylate kinase family. In terms of assembly, monomer.

Its subcellular location is the cytoplasm. The catalysed reaction is AMP + ATP = 2 ADP. It functions in the pathway purine metabolism; AMP biosynthesis via salvage pathway; AMP from ADP: step 1/1. Its function is as follows. Catalyzes the reversible transfer of the terminal phosphate group between ATP and AMP. Plays an important role in cellular energy homeostasis and in adenine nucleotide metabolism. The polypeptide is Adenylate kinase (Methanosarcina acetivorans (strain ATCC 35395 / DSM 2834 / JCM 12185 / C2A)).